A 371-amino-acid chain; its full sequence is Putative glutamate--cysteine ligase 2 (371 aa).

It belongs to the glutamate--cysteine ligase type 2 family. YbdK subfamily.

It carries out the reaction L-cysteine + L-glutamate + ATP = gamma-L-glutamyl-L-cysteine + ADP + phosphate + H(+). ATP-dependent carboxylate-amine ligase which exhibits weak glutamate--cysteine ligase activity. The protein is Putative glutamate--cysteine ligase 2 of Paraburkholderia xenovorans (strain LB400).